The chain runs to 3165 residues: ORFB polyprotein (3165 aa).

The region spanning 271 to 418 (MARSIGLSHE…LENEPDILVG (148 aa)) is the Peptidase C8 domain. Active-site for papain-like protease p48 activity residues include Cys-341 and His-388. Residues 453-472 (AEPGQRAKDNTNPSTPRPIE) are disordered. Transmembrane regions (helical) follow at residues 791–811 (IMIA…YVPY), 823–843 (YILL…GYAC), 1166–1186 (AGLF…AAIM), 1193–1213 (KYLV…KALW), 1215–1235 (FPIF…VSVY), and 1356–1376 (ALGF…LRPP). Positions 1793–2208 (FYKSRKALKQ…AEDSADYRAW (416 aa)) are RNA-directed RNA polymerase. Transmembrane regions (helical) follow at residues 2495-2515 (VRIY…MHWV), 2517-2537 (LFIQ…WSFW), and 2590-2610 (LGIV…EVLF). The Helicase ATP-binding domain occupies 2651-2796 (ATKAIEHGHV…IPFLEPTLPK (146 aa)). 2664–2671 (AKTASGKS) serves as a coordination point for ATP. The DEFH box signature appears at 2751–2754 (DEFH).

It in the C-terminal section; belongs to the DEAD box helicase family. In terms of processing, papain-like protease p48 is autocatalytically processed. The putative RNA-directed RNA polymerase/helicase may be further processed.

It is found in the host membrane. The enzyme catalyses RNA(n) + a ribonucleoside 5'-triphosphate = RNA(n+1) + diphosphate. The catalysed reaction is ATP + H2O = ADP + phosphate + H(+). Functionally, papain-like protease p48 is a cysteine protease of the peptidase family C8. The sequence is that of ORFB polyprotein from Cryphonectria hypovirus 1 (strain EP713) (CHV-1/EP713).